The sequence spans 202 residues: MNFRIFDKIGNSYKKSLQNRPVITKSLTGTVVFFLGDTLAQKIENRGYDPKRTLMMCTVGTFIVVPQIHFWFKFLDKTFTKPGWAGAIPKVVVDQLTFGPYLFVCNMTSVQLFHQGFNFDTHQWKDKMKKDFFPVLQKAWMIWPLTNCILFRFVHPDYRILISNLVSVGWNCILSTVSNKSFLKNNNNNNDPSISTMASLNE.

Helical transmembrane passes span 21-41 (PVIT…TLAQ), 54-72 (LMMC…HFWF), 138-154 (KAWM…FRFV), and 161-177 (LISN…LSTV).

It belongs to the peroxisomal membrane protein PXMP2/4 family.

The protein resides in the membrane. In Dictyostelium discoideum (Social amoeba), this protein is PXMP2/4 family protein 1.